Here is an 824-residue protein sequence, read N- to C-terminus: 4-methylaminobutanoate oxidase (formaldehyde-forming) (824 aa).

His67 is modified (pros-8alpha-FAD histidine).

Belongs to the GcvT family. It depends on FAD as a cofactor.

It carries out the reaction 4-(methylamino)butanoate + O2 + H2O = 4-aminobutanoate + formaldehyde + H2O2. It functions in the pathway alkaloid degradation; nicotine degradation. In terms of biological role, catalyzes the oxidative demethylation of 4-methylaminobutanoate produced from the pyrrolidine ring of nicotine. To a much lesser extent, can also use sarcosine as substrate, but is not active against dimethylglycine, methylaminopropionitrile, methylaminopropylamine, and alpha-methylaminobutanoate. In Paenarthrobacter nicotinovorans (Arthrobacter nicotinovorans), this protein is 4-methylaminobutanoate oxidase (formaldehyde-forming) (abo).